Consider the following 83-residue polypeptide: Protein kreg-1 (83 aa).

The disordered stretch occupies residues 62–83; the sequence is GHHHHHHGHHFGHHHHHHHGHH.

As to expression, weakly expressed in the intestine, but expression is up-regulated in response to Cu(2+).

Functionally, plays a role in the stress response to heavy metals such as copper, probably in a fos-1/kgb-1-dependent manner. The sequence is that of Protein kreg-1 from Caenorhabditis elegans.